Here is a 199-residue protein sequence, read N- to C-terminus: Pre T-cell antigen receptor alpha (199 aa).

An N-terminal signal peptide occupies residues 1 to 16 (MARTWLLLLLGVRCQA). Over 17 to 146 (LPSGIAGTPF…PEPLGGTQRQ (130 aa)) the chain is Extracellular. Residues C47 and C107 are joined by a disulfide bond. N-linked (GlcNAc...) asparagine glycosylation is found at N67 and N117. Residues 147 to 167 (VLWLSLLRLLLFKLLLLDVLL) form a helical membrane-spanning segment. Residues 168-199 (TCSHLRLHVLAGQHLQPPPSRKSLPPTHRIWT) lie on the Cytoplasmic side of the membrane.

Heterodimer with TCRB; disulfide linked. This heterodimer assembles with CD3 proteins into a signaling-competent pre-T-cell receptor complex. Interacts with RHBDD1. In terms of tissue distribution, isoform 1 is expressed at higher levels than isoform 2 in the thymus while only isoform 2 is expressed in polyclonal beta-only cells. Isoform 1 shows a predominant expression in immature thymocytes.

The protein resides in the membrane. It is found in the cell membrane. Functionally, component of the pre-T-cell receptor complex (composed of PTCRA, TCRB and the CD3 complex) that plays a crucial role in early T-cell development, particularly alpha-beta T cell differentiation. Isoform 1 acts to retain most TCRB intracellularly, while isoform 2 permits higher levels of cell surface TCRB expression and facilitates signaling from the CD3-TCRB complex. This is Pre T-cell antigen receptor alpha from Mus musculus (Mouse).